We begin with the raw amino-acid sequence, 249 residues long: Aspartate/glutamate leucyltransferase (249 aa).

Belongs to the R-transferase family. Bpt subfamily.

The protein localises to the cytoplasm. The enzyme catalyses N-terminal L-glutamyl-[protein] + L-leucyl-tRNA(Leu) = N-terminal L-leucyl-L-glutamyl-[protein] + tRNA(Leu) + H(+). It catalyses the reaction N-terminal L-aspartyl-[protein] + L-leucyl-tRNA(Leu) = N-terminal L-leucyl-L-aspartyl-[protein] + tRNA(Leu) + H(+). Functionally, functions in the N-end rule pathway of protein degradation where it conjugates Leu from its aminoacyl-tRNA to the N-termini of proteins containing an N-terminal aspartate or glutamate. The chain is Aspartate/glutamate leucyltransferase from Brucella suis (strain ATCC 23445 / NCTC 10510).